Consider the following 491-residue polypeptide: Zinc finger and SCAN domain-containing protein 22 (491 aa).

Serine 9 is subject to Phosphoserine. In terms of domain architecture, SCAN box spans 49 to 131 (RLRFRHFRYE…VLVEDLTQVL (83 aa)). Disordered regions lie at residues 134-161 (RGWDPGAEPTEASCKQSDLGESEPSNVT) and 204-249 (FKKT…DKFD). The segment covering 214 to 224 (VPTDQRGRESG) has biased composition (basic and acidic residues). The span at 225–241 (ASRNSSSAWPNLTSQEK) shows a compositional bias: polar residues. 8 consecutive C2H2-type zinc fingers follow at residues 268–290 (SKCRECRKMFQSASALEAHQKTH), 296–318 (YACSECGKAFSRSTHLAQHQVVH), 324–346 (HECKECGKAFSRVTHLTQHQRIH), 352–374 (YKCGECGKTFSRSTHLTQHQRVH), 380–402 (YECDACGKAFSQSTHLTQHQRIH), 408–430 (YKCDACGRAFSDCSALIRHLRIH), 436–458 (YQCKVCPKAFAQSSSLIEHQRIH), and 464–486 (YKCSDCGKAFSRSSALMVHLRIH). Lysine 443 is covalently cross-linked (Glycyl lysine isopeptide (Lys-Gly) (interchain with G-Cter in SUMO2)).

This sequence belongs to the krueppel C2H2-type zinc-finger protein family.

The protein resides in the nucleus. In terms of biological role, may be involved in transcriptional regulation. The polypeptide is Zinc finger and SCAN domain-containing protein 22 (ZSCAN22) (Homo sapiens (Human)).